Reading from the N-terminus, the 419-residue chain is Tyrosine--tRNA ligase (419 aa).

Tyr-34 contacts L-tyrosine. Positions 39-48 match the 'HIGH' region motif; the sequence is PTADSLHIGN. Positions 169 and 173 each coordinate L-tyrosine. A 'KMSKS' region motif is present at residues 230–234; that stretch reads KFGKT. ATP is bound at residue Lys-233. The S4 RNA-binding domain occupies 352–419; it reads VPLVELLVSA…KKKYYLIRYA (68 aa).

The protein belongs to the class-I aminoacyl-tRNA synthetase family. TyrS type 1 subfamily. In terms of assembly, homodimer.

It is found in the cytoplasm. The enzyme catalyses tRNA(Tyr) + L-tyrosine + ATP = L-tyrosyl-tRNA(Tyr) + AMP + diphosphate + H(+). Functionally, catalyzes the attachment of tyrosine to tRNA(Tyr) in a two-step reaction: tyrosine is first activated by ATP to form Tyr-AMP and then transferred to the acceptor end of tRNA(Tyr). The polypeptide is Tyrosine--tRNA ligase (Bacillus caldotenax).